A 314-amino-acid chain; its full sequence is Mitochondrial 2-oxoglutarate/malate carrier protein (314 aa).

An N-acetylalanine modification is found at Ala-2. Phosphoserine is present on Ser-6. Solcar repeat units follow at residues 23 to 108, 117 to 208, and 217 to 306; these read VKFL…LFER, PGFL…SKQF, and DNIL…MNKA. Residues 24–42 traverse the membrane as a helical segment; that stretch reads KFLFGGLAGMGATVFVQPL. Lys-57 is subject to N6-succinyllysine. Residues 83 to 101 form a helical membrane-spanning segment; that stretch reads GLSAGLLRQATYTTTRLGI. Tyr-102 carries the post-translational modification Phosphotyrosine. The next 3 membrane-spanning stretches (helical) occupy residues 119–140, 183–202, and 222–240; these read FLLKAVIGMTAGATGAFVGTPA, GCIPTMARAVVVNAAQLASY, and HFCASMISGLVTTAASMPV. An N6-acetyllysine modification is found at Lys-256. Residues 281–300 form a helical membrane-spanning segment; sequence GFTPYYARLGPHTVLTFIFL.

Belongs to the mitochondrial carrier (TC 2.A.29) family. In terms of assembly, interacts with SMIM26. In terms of processing, the N-terminus is blocked. Heart, liver and brain.

It localises to the mitochondrion inner membrane. It catalyses the reaction (S)-malate(in) + 2-oxoglutarate(out) = (S)-malate(out) + 2-oxoglutarate(in). The catalysed reaction is malonate(in) + 2-oxoglutarate(out) = malonate(out) + 2-oxoglutarate(in). It carries out the reaction succinate(in) + 2-oxoglutarate(out) = succinate(out) + 2-oxoglutarate(in). The enzyme catalyses maleate(in) + 2-oxoglutarate(out) = maleate(out) + 2-oxoglutarate(in). It catalyses the reaction oxaloacetate(in) + 2-oxoglutarate(out) = oxaloacetate(out) + 2-oxoglutarate(in). Functionally, catalyzes the transport of 2-oxoglutarate (alpha-oxoglutarate) across the inner mitochondrial membrane in an electroneutral exchange for malate. Can also exchange 2-oxoglutarate for other dicarboxylic acids such as malonate, succinate, maleate and oxaloacetate, although with lower affinity. Contributes to several metabolic processes, including the malate-aspartate shuttle, the oxoglutarate/isocitrate shuttle, in gluconeogenesis from lactate, and in nitrogen metabolism. Maintains mitochondrial fusion and fission events, and the organization and morphology of cristae. Involved in the regulation of apoptosis. Helps protect from cytotoxic-induced apoptosis by modulating glutathione levels in mitochondria. This is Mitochondrial 2-oxoglutarate/malate carrier protein (SLC25A11) from Bos taurus (Bovine).